Consider the following 247-residue polypeptide: NAD-dependent protein deacetylase (247 aa).

The Deacetylase sirtuin-type domain occupies 1–247; that stretch reads METFKSILHE…EFARSLGMKK (247 aa). Positions 20, 24, 31, 32, 100, 102, 103, and 118 each coordinate NAD(+). Phe31 is a nicotinamide binding site. Nicotinamide contacts are provided by Ile102 and Asp103. The active-site Proton acceptor is the His118. Zn(2+) contacts are provided by Cys126, Cys129, Cys146, and Cys156. NAD(+)-binding residues include Thr192, Ser193, Asn218, and Ile236.

This sequence belongs to the sirtuin family. Class U subfamily. Zn(2+) serves as cofactor.

The protein resides in the cytoplasm. The enzyme catalyses N(6)-acetyl-L-lysyl-[protein] + NAD(+) + H2O = 2''-O-acetyl-ADP-D-ribose + nicotinamide + L-lysyl-[protein]. NAD-dependent protein deacetylase which modulates the activities of several enzymes which are inactive in their acetylated form. The polypeptide is NAD-dependent protein deacetylase (Bacillus subtilis (strain 168)).